The chain runs to 1168 residues: Transcription-repair-coupling factor (1168 aa).

The 162-residue stretch at 633 to 794 folds into the Helicase ATP-binding domain; it reads DMQKSRPMDR…MLGVRDLSVI (162 aa). An ATP-binding site is contributed by 646-653; it reads GDVGYGKT. Residues 747 to 750 carry the DEEQ box motif; sequence DEEQ. The Helicase C-terminal domain occupies 808-969; it reads VLEQNMSFIK…GFKIAMRDLN (162 aa).

It in the N-terminal section; belongs to the UvrB family. In the C-terminal section; belongs to the helicase family. RecG subfamily.

The protein localises to the cytoplasm. Couples transcription and DNA repair by recognizing RNA polymerase (RNAP) stalled at DNA lesions. Mediates ATP-dependent release of RNAP and its truncated transcript from the DNA, and recruitment of nucleotide excision repair machinery to the damaged site. In Staphylococcus aureus (strain MRSA252), this protein is Transcription-repair-coupling factor.